The chain runs to 214 residues: Large ribosomal subunit protein uL3 (214 aa).

An N5-methylglutamine modification is found at Q153.

This sequence belongs to the universal ribosomal protein uL3 family. Part of the 50S ribosomal subunit. Forms a cluster with proteins L14 and L19. Methylated by PrmB.

In terms of biological role, one of the primary rRNA binding proteins, it binds directly near the 3'-end of the 23S rRNA, where it nucleates assembly of the 50S subunit. The sequence is that of Large ribosomal subunit protein uL3 from Aromatoleum aromaticum (strain DSM 19018 / LMG 30748 / EbN1) (Azoarcus sp. (strain EbN1)).